Reading from the N-terminus, the 409-residue chain is Protein ROOT PRIMORDIUM DEFECTIVE 1 (409 aa).

Residues 47 to 386 form the PORR domain; sequence VRDHGYDNYM…RLAELVLMSP (340 aa).

In terms of tissue distribution, expressed in roots, hypocotyls, cotyledons and shoot apex.

Its function is as follows. Involved in pre-arranging the maintenance of the active cell proliferation during root primordium development. Does not seem to be involved in cell cycle progression. This Arabidopsis thaliana (Mouse-ear cress) protein is Protein ROOT PRIMORDIUM DEFECTIVE 1 (RPD1).